The sequence spans 298 residues: Zinc import ATP-binding protein ZnuC (298 aa).

Residues 17–232 form the ABC transporter domain; that stretch reads IELRNAGVYR…PEYVRLFGSR (216 aa). 49-56 is an ATP binding site; sequence GQNGAGKS. The segment at 273–298 is disordered; it reads RGHCHVEDGHHHDHEHHHHEGGQPRA. Positions 276-298 are enriched in basic and acidic residues; that stretch reads CHVEDGHHHDHEHHHHEGGQPRA.

Belongs to the ABC transporter superfamily. Zinc importer (TC 3.A.1.15.5) family. As to quaternary structure, the complex is composed of two ATP-binding proteins (ZnuC), two transmembrane proteins (ZnuB) and a solute-binding protein (ZnuA).

The protein localises to the cell inner membrane. It catalyses the reaction Zn(2+)(out) + ATP(in) + H2O(in) = Zn(2+)(in) + ADP(in) + phosphate(in) + H(+)(in). Its function is as follows. Part of the ABC transporter complex ZnuABC involved in zinc import. Responsible for energy coupling to the transport system. This Brucella melitensis biotype 1 (strain ATCC 23456 / CCUG 17765 / NCTC 10094 / 16M) protein is Zinc import ATP-binding protein ZnuC.